Here is a 144-residue protein sequence, read N- to C-terminus: Large ribosomal subunit protein uL15 (144 aa).

A disordered region spans residues 1–48 (MQLNNLKPAAGSKHAKRRVGRGIGSGLGKTAGRGHKGQKSRSGGFHKV). The segment covering 21–31 (RGIGSGLGKTA) has biased composition (gly residues).

It belongs to the universal ribosomal protein uL15 family. Part of the 50S ribosomal subunit.

Binds to the 23S rRNA. In Cupriavidus pinatubonensis (strain JMP 134 / LMG 1197) (Cupriavidus necator (strain JMP 134)), this protein is Large ribosomal subunit protein uL15.